Here is a 60-residue protein sequence, read N- to C-terminus: Large ribosomal subunit protein uL30 (60 aa).

The protein belongs to the universal ribosomal protein uL30 family. As to quaternary structure, part of the 50S ribosomal subunit.

The sequence is that of Large ribosomal subunit protein uL30 from Streptococcus pyogenes serotype M1.